Consider the following 337-residue polypeptide: Ribosomal RNA small subunit methyltransferase H (337 aa).

Residues 45-47 (GGH), aspartate 64, histidine 91, aspartate 112, and glutamine 119 each bind S-adenosyl-L-methionine.

The protein belongs to the methyltransferase superfamily. RsmH family.

Its subcellular location is the cytoplasm. The catalysed reaction is cytidine(1402) in 16S rRNA + S-adenosyl-L-methionine = N(4)-methylcytidine(1402) in 16S rRNA + S-adenosyl-L-homocysteine + H(+). Its function is as follows. Specifically methylates the N4 position of cytidine in position 1402 (C1402) of 16S rRNA. This is Ribosomal RNA small subunit methyltransferase H from Cutibacterium acnes (strain DSM 16379 / KPA171202) (Propionibacterium acnes).